A 220-amino-acid chain; its full sequence is Apoptosis regulator BALF1 (220 aa).

It belongs to the Epstein-Barr virus BALF1 family. In terms of assembly, interacts with BHRF1; this interaction modulates BHRF1 activity. Interacts with host BAX and BAK1.

The protein localises to the host cytoplasm. Its function is as follows. Modulates the antiapoptotic activity of the viral protein BHRF1. May also play an active part in oncogenesis in Burkitt's lymphomy and nasopharyngeal carcinoma. In Homo sapiens (Human), this protein is Apoptosis regulator BALF1.